A 236-amino-acid chain; its full sequence is Ribonuclease P protein component 3 (236 aa).

It belongs to the eukaryotic/archaeal RNase P protein component 3 family. As to quaternary structure, consists of a catalytic RNA component and at least 4-5 protein subunits.

The protein localises to the cytoplasm. It catalyses the reaction Endonucleolytic cleavage of RNA, removing 5'-extranucleotides from tRNA precursor.. In terms of biological role, part of ribonuclease P, a protein complex that generates mature tRNA molecules by cleaving their 5'-ends. The protein is Ribonuclease P protein component 3 of Natronomonas pharaonis (strain ATCC 35678 / DSM 2160 / CIP 103997 / JCM 8858 / NBRC 14720 / NCIMB 2260 / Gabara) (Halobacterium pharaonis).